The sequence spans 189 residues: Segregation and condensation protein B (189 aa).

Belongs to the ScpB family. Homodimer. Homodimerization may be required to stabilize the binding of ScpA to the Smc head domains. Component of a cohesin-like complex composed of ScpA, ScpB and the Smc homodimer, in which ScpA and ScpB bind to the head domain of Smc. The presence of the three proteins is required for the association of the complex with DNA.

The protein resides in the cytoplasm. Its function is as follows. Participates in chromosomal partition during cell division. May act via the formation of a condensin-like complex containing Smc and ScpA that pull DNA away from mid-cell into both cell halves. This Streptococcus mitis protein is Segregation and condensation protein B.